A 573-amino-acid chain; its full sequence is 60 kDa heat shock protein, mitochondrial (573 aa).

The transit peptide at 1-26 (MLRLPTVLRQMRPVSRALAPHLTRAY) directs the protein to the mitochondrion. K31 bears the N6-succinyllysine mark. S67 and S70 each carry phosphoserine. K75 lines the ATP pocket. Residue K75 is modified to N6-acetyllysine. K82 carries the N6-acetyllysine; alternate modification. Position 82 is an N6-succinyllysine; alternate (K82). K87 is subject to N6-acetyllysine. Phosphotyrosine is present on Y90. Residue K91 is modified to N6-acetyllysine. 111-115 (DGTTT) contacts ATP. At K125 the chain carries N6-acetyllysine; alternate. Position 125 is an N6-succinyllysine; alternate (K125). K130 carries the post-translational modification N6-acetyllysine. Residue K133 is modified to N6-acetyllysine; alternate. Residue K133 is modified to N6-succinyllysine; alternate. K133 is subject to N6-malonyllysine; alternate. K156 bears the N6-acetyllysine mark. K191, K202, K205, K218, and K236 each carry N6-acetyllysine; alternate. 5 positions are modified to N6-succinyllysine; alternate: K191, K202, K205, K218, and K236. K249 bears the N6-acetyllysine mark. K250 carries the N6-acetyllysine; alternate modification. An N6-succinyllysine; alternate modification is found at K250. N6-acetyllysine occurs at positions 269 and 292. At K301 the chain carries N6-succinyllysine. K314 carries the N6-acetyllysine modification. K352 carries the N6-acetyllysine; alternate modification. K352 is modified (N6-succinyllysine; alternate). K359 and K389 each carry N6-acetyllysine. Residue K396 is modified to N6-acetyllysine; alternate. K396 carries the post-translational modification N6-succinyllysine; alternate. The residue at position 410 (S410) is a Phosphoserine. G440 serves as a coordination point for ATP. K455 carries the N6-acetyllysine; alternate modification. The residue at position 455 (K455) is an N6-succinyllysine; alternate. N6-acetyllysine is present on K469. K481 carries the N6-acetyllysine; alternate modification. K481 carries the post-translational modification N6-succinyllysine; alternate. The residue at position 488 (S488) is a Phosphoserine. An ATP-binding site is contributed by D520. Residue K551 forms a Glycyl lysine isopeptide (Lys-Gly) (interchain with G-Cter in SUMO2) linkage.

This sequence belongs to the chaperonin (HSP60) family. As to quaternary structure, homoheptamer arranged in a ring structure. The functional units of these chaperonins consist of heptameric rings of the large subunit Hsp60, which function as a back-to-back double ring. Interacts with 2 heptameric Hsp10 rings to form the symmetrical football complex. Interacts with HRAS. Interacts with ATAD3A. Interacts with ETFBKMT and EEF1AKMT3. Interacts with MFHAS1.

Its subcellular location is the mitochondrion matrix. The catalysed reaction is ATP + H2O + a folded polypeptide = ADP + phosphate + an unfolded polypeptide.. Functionally, chaperonin implicated in mitochondrial protein import and macromolecular assembly. Together with Hsp10, facilitates the correct folding of imported proteins. May also prevent misfolding and promote the refolding and proper assembly of unfolded polypeptides generated under stress conditions in the mitochondrial matrix. The functional units of these chaperonins consist of heptameric rings of the large subunit Hsp60, which function as a back-to-back double ring. In a cyclic reaction, Hsp60 ring complexes bind one unfolded substrate protein per ring, followed by the binding of ATP and association with 2 heptameric rings of the co-chaperonin Hsp10. This leads to sequestration of the substrate protein in the inner cavity of Hsp60 where, for a certain period of time, it can fold undisturbed by other cell components. Synchronous hydrolysis of ATP in all Hsp60 subunits results in the dissociation of the chaperonin rings and the release of ADP and the folded substrate protein. The protein is 60 kDa heat shock protein, mitochondrial (Hspd1) of Rattus norvegicus (Rat).